Consider the following 437-residue polypeptide: tRNA-2-methylthio-N(6)-dimethylallyladenosine synthase (437 aa).

Positions 1-115 (MKVYIETMGC…ISQVIHKEKA (115 aa)) constitute an MTTase N-terminal domain. Positions 10, 46, 78, 148, 152, and 155 each coordinate [4Fe-4S] cluster. Residues 134–367 (KKAQIRSLLN…QNRHKEILEE (234 aa)) form the Radical SAM core domain. In terms of domain architecture, TRAM spans 370–436 (KLEVGKTHVV…KGRLMATTKG (67 aa)).

Belongs to the methylthiotransferase family. MiaB subfamily. As to quaternary structure, monomer. The cofactor is [4Fe-4S] cluster.

It is found in the cytoplasm. The catalysed reaction is N(6)-dimethylallyladenosine(37) in tRNA + (sulfur carrier)-SH + AH2 + 2 S-adenosyl-L-methionine = 2-methylsulfanyl-N(6)-dimethylallyladenosine(37) in tRNA + (sulfur carrier)-H + 5'-deoxyadenosine + L-methionine + A + S-adenosyl-L-homocysteine + 2 H(+). Catalyzes the methylthiolation of N6-(dimethylallyl)adenosine (i(6)A), leading to the formation of 2-methylthio-N6-(dimethylallyl)adenosine (ms(2)i(6)A) at position 37 in tRNAs that read codons beginning with uridine. The polypeptide is tRNA-2-methylthio-N(6)-dimethylallyladenosine synthase (Helicobacter pylori (strain G27)).